Reading from the N-terminus, the 594-residue chain is Glutamate decarboxylase 1 (594 aa).

The segment covering 1–13 (MASSTPSSSATSS) has biased composition (low complexity). A disordered region spans residues 1–23 (MASSTPSSSATSSNAGADPNTTN). Residue Ser78 is modified to Phosphoserine. A 4-aminobutanoate-binding site is contributed by 190 to 192 (QLS). Lys405 is modified (N6-(pyridoxal phosphate)lysine). Arg567 contacts 4-aminobutanoate.

The protein belongs to the group II decarboxylase family. As to quaternary structure, homodimer. Pyridoxal 5'-phosphate is required as a cofactor.

The catalysed reaction is L-glutamate + H(+) = 4-aminobutanoate + CO2. In terms of biological role, catalyzes the synthesis of the inhibitory neurotransmitter gamma-aminobutyric acid (GABA) with pyridoxal 5'-phosphate as cofactor. In Bos taurus (Bovine), this protein is Glutamate decarboxylase 1 (GAD1).